Consider the following 466-residue polypeptide: Sulfate adenylyltransferase subunit 1 (466 aa).

The tr-type G domain occupies 22 to 237 (KELVRFLTCG…LNTIDVKTQE (216 aa)). A G1 region spans residues 31-38 (GSVDDGKS). 31–38 (GSVDDGKS) provides a ligand contact to GTP. The G2 stretch occupies residues 89–93 (GITID). A G3 region spans residues 110–113 (DTPG). GTP is bound by residues 110–114 (DTPGH) and 165–168 (NKMD). The interval 165-168 (NKMD) is G4. A G5 region spans residues 202–204 (SAL).

This sequence belongs to the TRAFAC class translation factor GTPase superfamily. Classic translation factor GTPase family. CysN/NodQ subfamily. As to quaternary structure, heterodimer composed of CysD, the smaller subunit, and CysN.

The catalysed reaction is sulfate + ATP + H(+) = adenosine 5'-phosphosulfate + diphosphate. The protein operates within sulfur metabolism; hydrogen sulfide biosynthesis; sulfite from sulfate: step 1/3. Functionally, with CysD forms the ATP sulfurylase (ATPS) that catalyzes the adenylation of sulfate producing adenosine 5'-phosphosulfate (APS) and diphosphate, the first enzymatic step in sulfur assimilation pathway. APS synthesis involves the formation of a high-energy phosphoric-sulfuric acid anhydride bond driven by GTP hydrolysis by CysN coupled to ATP hydrolysis by CysD. The sequence is that of Sulfate adenylyltransferase subunit 1 from Colwellia psychrerythraea (strain 34H / ATCC BAA-681) (Vibrio psychroerythus).